Reading from the N-terminus, the 233-residue chain is Transmembrane protein 182 (233 aa).

The signal sequence occupies residues 1–26 (MKLSVGIFFGGLFAALGVLLFLVAFG). The Extracellular portion of the chain corresponds to 27-117 (TDYWLLATEI…SYDSAVIYRG (91 aa)). An interaction with ITGB1 region spans residues 52-62 (TFHHEGFFWRC). Residues Asn88 and Asn105 are each glycosylated (N-linked (GlcNAc...) asparagine). Residues 118-138 (FWTVLMLLGVITIVMASFLII) traverse the membrane as a helical segment. Topologically, residues 139-153 (CAAPFASHILYKAGG) are cytoplasmic. A helical membrane pass occupies residues 154–174 (GFYILAGVLFSLVVVMYVIWV). Over 175–203 (QAMADLENYTNMKKMDCPDFAVYVRYGWS) the chain is Extracellular. Residues 204–224 (FMLAPIGVFFALLAGMLFLLV) traverse the membrane as a helical segment. Topologically, residues 225 to 233 (GRAIYLNSD) are cytoplasmic.

Belongs to the TMEM182 family. In terms of assembly, interacts with ITGB1. As to expression, expressed in skeletal muscle and adipose tissue.

It is found in the cell membrane. Functionally, negatively regulates myogenesis and skeletal muscle regeneration via its association with ITGB1. Modulates ITGB1 activation by decreasing ITGB1-LAMB1 interaction and inhibiting ITGB1-mediated intracellular signaling during myogenesis. The chain is Transmembrane protein 182 (TMEM182) from Gallus gallus (Chicken).